A 539-amino-acid chain; its full sequence is Chaperonin GroEL (539 aa).

ATP contacts are provided by residues 29–32 (TLGP), 86–90 (DGTTT), glycine 413, 477–479 (DAL), and aspartate 493.

Belongs to the chaperonin (HSP60) family. In terms of assembly, forms a cylinder of 14 subunits composed of two heptameric rings stacked back-to-back. Interacts with the co-chaperonin GroES.

Its subcellular location is the cytoplasm. The catalysed reaction is ATP + H2O + a folded polypeptide = ADP + phosphate + an unfolded polypeptide.. Together with its co-chaperonin GroES, plays an essential role in assisting protein folding. The GroEL-GroES system forms a nano-cage that allows encapsulation of the non-native substrate proteins and provides a physical environment optimized to promote and accelerate protein folding. The polypeptide is Chaperonin GroEL (Clostridium perfringens (strain ATCC 13124 / DSM 756 / JCM 1290 / NCIMB 6125 / NCTC 8237 / Type A)).